We begin with the raw amino-acid sequence, 333 residues long: HTH-type transcriptional regulator pepR1 (333 aa).

The region spanning Val6–Ser60 is the HTH lacI-type domain. The H-T-H motif DNA-binding region spans Ile8–Asn27.

Transcriptional regulator of the pepQ gene for prolidase. This chain is HTH-type transcriptional regulator pepR1 (pepR1), found in Lactobacillus delbrueckii subsp. lactis.